The following is an 832-amino-acid chain: Putative pentatricopeptide repeat-containing protein At5g08310, mitochondrial (832 aa).

Residues Met1–Leu27 constitute a mitochondrion transit peptide. PPR repeat units lie at residues Asp105–Met139, Ser140–Val174, Asn176–Phe212, Asp213–Asp247, Thr252–Leu281, Asn282–Ala316, Asp317–Pro351, Asp352–Lys383, Val385–Asn415, Asp438–Pro472, Gly473–Pro507, Ser508–Pro542, Trp543–Gly577, His578–Pro612, Asp613–Pro647, Thr648–Pro682, Asp683–Pro717, Asn718–Pro752, and Asp753–Pro787.

It belongs to the PPR family. P subfamily.

The protein localises to the mitochondrion. This chain is Putative pentatricopeptide repeat-containing protein At5g08310, mitochondrial, found in Arabidopsis thaliana (Mouse-ear cress).